We begin with the raw amino-acid sequence, 380 residues long: Flap endonuclease 1 (380 aa).

The tract at residues 1–104 (MGIHGLAKLI…GELEKRGERR (104 aa)) is N-domain. Asp-34 is a binding site for Mg(2+). Positions 47 and 70 each coordinate DNA. Positions 86, 158, 160, 179, and 181 each coordinate Mg(2+). An I-domain region spans residues 122 to 253 (NIDKFSKRLV…KRAMDLIRQH (132 aa)). Glu-158 is a binding site for DNA. The DNA site is built by Gly-231 and Asp-233. Asp-233 is a Mg(2+) binding site. The tract at residues 336–344 (TQGRLDSFF) is interaction with PCNA. The segment at 348–380 (GSLSSKRKEPEMKGSTKKKLKTGATAGKFKKGK) is disordered.

It belongs to the XPG/RAD2 endonuclease family. FEN1 subfamily. Interacts with PCNA. Three molecules of fen1 bind to one PCNA trimer with each molecule binding to one PCNA monomer. PCNA stimulates the nuclease activity without altering cleavage specificity. It depends on Mg(2+) as a cofactor. Phosphorylated. Phosphorylation upon DNA damage induces relocalization to the nuclear plasma.

The protein localises to the nucleus. The protein resides in the nucleolus. Its subcellular location is the nucleoplasm. It localises to the mitochondrion. Structure-specific nuclease with 5'-flap endonuclease and 5'-3' exonuclease activities involved in DNA replication and repair. During DNA replication, cleaves the 5'-overhanging flap structure that is generated by displacement synthesis when DNA polymerase encounters the 5'-end of a downstream Okazaki fragment. It enters the flap from the 5'-end and then tracks to cleave the flap base, leaving a nick for ligation. Also involved in the long patch base excision repair (LP-BER) pathway, by cleaving within the apurinic/apyrimidinic (AP) site-terminated flap. Acts as a genome stabilization factor that prevents flaps from equilibrating into structures that lead to duplications and deletions. Also possesses 5'-3' exonuclease activity on nicked or gapped double-stranded DNA, and exhibits RNase H activity. Also involved in replication and repair of rDNA and in repairing mitochondrial DNA. In Osmerus mordax (Rainbow smelt), this protein is Flap endonuclease 1 (fen1).